The sequence spans 316 residues: Solute carrier family 25 member 32 (316 aa).

Solcar repeat units lie at residues 20–109, 118–209, and 222–306; these read HVRY…IKSY, LEPL…LKLK, and LSTA…VSHF. The next 6 helical transmembrane spans lie at 26–46, 89–106, 123–143, 185–203, 227–243, and 281–300; these read LVAG…LDLV, VWGA…YNAI, YLVS…PLWV, GFVP…FMAY, YISV…AATY, and GIAP…FVVY.

This sequence belongs to the mitochondrial carrier (TC 2.A.29) family.

The protein resides in the mitochondrion inner membrane. It catalyses the reaction FAD(in) = FAD(out). Functionally, facilitates flavin adenine dinucleotide (FAD) translocation across the mitochondrial inner membrane into the mitochondrial matrix where it acts as a redox cofactor to assist flavoenzyme activities in fundamental metabolic processes including fatty acid beta-oxidation, amino acid and choline metabolism as well as mitochondrial electron transportation. In particular, provides FAD to DLD dehydrogenase of the glycine cleavage system, part of mitochondrial one-carbon metabolic pathway involved in neural tube closure in early embryogenesis. The polypeptide is Solute carrier family 25 member 32 (Mus musculus (Mouse)).